Reading from the N-terminus, the 83-residue chain is NAD(P)H-quinone oxidoreductase subunit L (83 aa).

A run of 2 helical transmembrane segments spans residues 18–38 (ILAY…ALFF) and 53–73 (LLVY…APFL).

The protein belongs to the complex I NdhL subunit family. As to quaternary structure, NDH-1 can be composed of about 15 different subunits; different subcomplexes with different compositions have been identified which probably have different functions.

It localises to the cellular thylakoid membrane. It catalyses the reaction a plastoquinone + NADH + (n+1) H(+)(in) = a plastoquinol + NAD(+) + n H(+)(out). The catalysed reaction is a plastoquinone + NADPH + (n+1) H(+)(in) = a plastoquinol + NADP(+) + n H(+)(out). In terms of biological role, NDH-1 shuttles electrons from an unknown electron donor, via FMN and iron-sulfur (Fe-S) centers, to quinones in the respiratory and/or the photosynthetic chain. The immediate electron acceptor for the enzyme in this species is believed to be plastoquinone. Couples the redox reaction to proton translocation, and thus conserves the redox energy in a proton gradient. Cyanobacterial NDH-1 also plays a role in inorganic carbon-concentration. The sequence is that of NAD(P)H-quinone oxidoreductase subunit L from Parasynechococcus marenigrum (strain WH8102).